The primary structure comprises 488 residues: Bifunctional protein GlmU (488 aa).

The interval 1–237 (MPRTRTPLAA…AEEASGVNDR (237 aa)) is pyrophosphorylase. UDP-N-acetyl-alpha-D-glucosamine-binding positions include 13 to 16 (LAAG), lysine 27, glutamine 82, 87 to 88 (GT), 110 to 112 (SGD), glycine 149, glutamate 164, asparagine 179, and asparagine 235. Residue aspartate 112 participates in Mg(2+) binding. Asparagine 235 contacts Mg(2+). Residues 238–258 (VELSRANRVMVGRLAEAFMRA) form a linker region. Residues 259–488 (GVTIEDPARF…KGRPAARRAS (230 aa)) form an N-acetyltransferase region. UDP-N-acetyl-alpha-D-glucosamine-binding residues include arginine 341 and lysine 359. The active-site Proton acceptor is the histidine 371. Residues tyrosine 374 and asparagine 385 each coordinate UDP-N-acetyl-alpha-D-glucosamine. Residues alanine 388, 394–395 (NY), serine 413, alanine 431, and arginine 448 contribute to the acetyl-CoA site. A disordered region spans residues 459–488 (AQRQAEKQMKGTATGPASARKGRPAARRAS). Residues 478–488 (RKGRPAARRAS) show a composition bias toward basic residues.

The protein in the N-terminal section; belongs to the N-acetylglucosamine-1-phosphate uridyltransferase family. It in the C-terminal section; belongs to the transferase hexapeptide repeat family. Homotrimer. Mg(2+) is required as a cofactor.

It is found in the cytoplasm. The enzyme catalyses alpha-D-glucosamine 1-phosphate + acetyl-CoA = N-acetyl-alpha-D-glucosamine 1-phosphate + CoA + H(+). It carries out the reaction N-acetyl-alpha-D-glucosamine 1-phosphate + UTP + H(+) = UDP-N-acetyl-alpha-D-glucosamine + diphosphate. The protein operates within nucleotide-sugar biosynthesis; UDP-N-acetyl-alpha-D-glucosamine biosynthesis; N-acetyl-alpha-D-glucosamine 1-phosphate from alpha-D-glucosamine 6-phosphate (route II): step 2/2. It functions in the pathway nucleotide-sugar biosynthesis; UDP-N-acetyl-alpha-D-glucosamine biosynthesis; UDP-N-acetyl-alpha-D-glucosamine from N-acetyl-alpha-D-glucosamine 1-phosphate: step 1/1. Its pathway is bacterial outer membrane biogenesis; LPS lipid A biosynthesis. In terms of biological role, catalyzes the last two sequential reactions in the de novo biosynthetic pathway for UDP-N-acetylglucosamine (UDP-GlcNAc). The C-terminal domain catalyzes the transfer of acetyl group from acetyl coenzyme A to glucosamine-1-phosphate (GlcN-1-P) to produce N-acetylglucosamine-1-phosphate (GlcNAc-1-P), which is converted into UDP-GlcNAc by the transfer of uridine 5-monophosphate (from uridine 5-triphosphate), a reaction catalyzed by the N-terminal domain. This is Bifunctional protein GlmU from Anaeromyxobacter dehalogenans (strain 2CP-1 / ATCC BAA-258).